The sequence spans 69 residues: Putative membrane protein insertion efficiency factor (69 aa).

The protein belongs to the UPF0161 family.

Its subcellular location is the cell inner membrane. Could be involved in insertion of integral membrane proteins into the membrane. The polypeptide is Putative membrane protein insertion efficiency factor (Novosphingobium aromaticivorans (strain ATCC 700278 / DSM 12444 / CCUG 56034 / CIP 105152 / NBRC 16084 / F199)).